The chain runs to 465 residues: ATP-dependent rRNA helicase rrp3 (465 aa).

The tract at residues 1–46 (MSALKKRKITEKQPETNSDSEAESVSSRGSAKDETQTSGEEPAPAK) is disordered. Residues 15–29 (ETNSDSEAESVSSRG) are compositionally biased toward polar residues. The Q motif motif lies at 46–74 (KSFKELGIIDQLCEACENMGYKAPTPIQS). The Helicase ATP-binding domain occupies 77–248 (IPLALEGRDV…RASLSNPVRV (172 aa)). 90–97 (AETGSGKT) provides a ligand contact to ATP. A DEAD box motif is present at residues 196–199 (DEAD). In terms of domain architecture, Helicase C-terminal spans 275–419 (YLVYLLNEFA…EYQVEKDEVM (145 aa)). Residues 436–465 (MKSFDEKKGARGKKFGKGKRSRDDMDQEEG) are disordered. The segment covering 445-455 (ARGKKFGKGKR) has biased composition (basic residues).

The protein belongs to the DEAD box helicase family. DDX47/RRP3 subfamily. As to quaternary structure, interacts with the SSU processome.

The protein resides in the nucleus. The catalysed reaction is ATP + H2O = ADP + phosphate + H(+). In terms of biological role, ATP-dependent rRNA helicase required for pre-ribosomal RNA processing. Involved in the maturation of the 35S-pre-rRNA and to its cleavage to mature 18S rRNA. The sequence is that of ATP-dependent rRNA helicase rrp3 from Emericella nidulans (strain FGSC A4 / ATCC 38163 / CBS 112.46 / NRRL 194 / M139) (Aspergillus nidulans).